Here is a 601-residue protein sequence, read N- to C-terminus: MEGSDFLLAGVLFLFAAVAAVPLASRLGIGAVLGYLLAGIAIGPWGLGFISDVDEILHFSELGVVFLMFIIGLELNPSKLWQLRRSIFGVGAAQVLLSAALLAGLLMLTDFAWQAAVVGGIGLAMSSTAMALQLMRDKGMNRSESGQLGFSVLLFQDLAVIPALALVPLLAGSADEHFDWMKIGMKVLAFVGMLIGGRYLLRPVFRFIAASGVREVFTAATLLLVLGSALFMDALGLSMALGTFIAGVLLAESEYRHELETAIDPFKGLLLGLFFISVGMSLNLGVLYTHLLWVVIAVVVLVAVKILVLYLLARLYGVRSSERMQFAGVLSQGGEFAFVLFSTASSQRLFQGDQMALLLVTVTLSMMTTPLLMKLVDKWLSRQFNGPEEEDEKPWVNDDKPQVIVVGFGRFGQVIGRLLMANKMRITVLERDISAVNLMRKYGYKVYYGDATQVDLLRSAGAEAAESIVITCNEPEDTMKLVEICQQHFPHLHILARARGRVEAHELLQAGVTQFSRETFSSALELGRKTLVTLGMHPHQAQRAQLHFRRLDMRMLRELIPMHADTVQISRAREARRELEEIFQREMQQERRQLDGWDEFE.

13 helical membrane passes run 4–24 (SDFLLAGVLFLFAAVAAVPLA), 29–49 (IGAVLGYLLAGIAIGPWGLGF), 55–75 (EILHFSELGVVFLMFIIGLEL), 87–107 (IFGVGAAQVLLSAALLAGLLM), 115–135 (AAVVGGIGLAMSSTAMALQLM), 152–172 (VLLFQDLAVIPALALVPLLAG), 177–197 (HFDWMKIGMKVLAFVGMLIGG), 207–227 (FIAASGVREVFTAATLLLVLG), 230–250 (LFMDALGLSMALGTFIAGVLL), 268–288 (GLLLGLFFISVGMSLNLGVLY), 291–311 (LLWVVIAVVVLVAVKILVLYL), 324–344 (MQFAGVLSQGGEFAFVLFSTA), and 356–376 (ALLLVTVTLSMMTTPLLMKLV). The RCK N-terminal domain maps to 400–519 (KPQVIVVGFG…AGVTQFSRET (120 aa)).

This sequence belongs to the monovalent cation:proton antiporter 2 (CPA2) transporter (TC 2.A.37) family. KefB subfamily. As to quaternary structure, interacts with the regulatory subunit KefG.

It localises to the cell inner membrane. In terms of biological role, pore-forming subunit of a potassium efflux system that confers protection against electrophiles. Catalyzes K(+)/H(+) antiport. This is Glutathione-regulated potassium-efflux system protein KefB from Escherichia coli O17:K52:H18 (strain UMN026 / ExPEC).